A 648-amino-acid chain; its full sequence is Centrosomal protein of 63 kDa-B (648 aa).

2 coiled-coil regions span residues 19–188 (DSCE…QSHN) and 222–555 (EEEL…DAAS). The residue at position 559 (Ser559) is a Phosphoserine; by atm and atr. A coiled-coil region spans residues 611–644 (FLQEEEQRSHELLQRLNAHIEELKQESQRTVEHF).

Belongs to the CEP63 family. Phosphorylation at Ser-559 by atm and atr promotes its delocalization from the centrosome and impairs its ability to promote centrosome dependent spindle assembly.

The protein resides in the cytoplasm. The protein localises to the cytoskeleton. Its subcellular location is the microtubule organizing center. It is found in the centrosome. It localises to the centriole. Required for normal spindle assembly. Plays a key role in mother-centriole-dependent centriole duplication. Plays a role in DNA damage response. Following DNA damage, such as double-strand breaks (DSBs), is removed from centrosomes; this leads to the inactivation of spindle assembly and delay in mitotic progression. This is Centrosomal protein of 63 kDa-B (cep63-b) from Xenopus laevis (African clawed frog).